Consider the following 394-residue polypeptide: Phosphoglycerate kinase (394 aa).

Residues Asp21 to Asn23, Arg36, His59 to Arg62, Arg118, and Arg151 each bind substrate. Phosphoserine is present on Ser183. Residues Lys201 and Gly292 each coordinate ATP. Thr299 carries the post-translational modification Phosphothreonine. ATP-binding positions include Glu323 and Gly350–Ser353.

Belongs to the phosphoglycerate kinase family. Monomer.

It localises to the cytoplasm. The catalysed reaction is (2R)-3-phosphoglycerate + ATP = (2R)-3-phospho-glyceroyl phosphate + ADP. It functions in the pathway carbohydrate degradation; glycolysis; pyruvate from D-glyceraldehyde 3-phosphate: step 2/5. The chain is Phosphoglycerate kinase from Bacillus cereus (strain ZK / E33L).